Here is a 225-residue protein sequence, read N- to C-terminus: Pyridoxine/pyridoxamine 5'-phosphate oxidase (225 aa).

Substrate contacts are provided by residues 21–24 (RKSY) and K79. Residues 74–79 (RVVLIK), 89–90 (YT), R95, and K96 each bind FMN. Residues Y136, R140, and S144 each contribute to the substrate site. FMN is bound by residues 153 to 154 (QS) and W197. 203-205 (RLH) lines the substrate pocket. R207 contributes to the FMN binding site.

It belongs to the pyridoxamine 5'-phosphate oxidase family. In terms of assembly, homodimer. The cofactor is FMN.

The catalysed reaction is pyridoxamine 5'-phosphate + O2 + H2O = pyridoxal 5'-phosphate + H2O2 + NH4(+). It carries out the reaction pyridoxine 5'-phosphate + O2 = pyridoxal 5'-phosphate + H2O2. Its pathway is cofactor metabolism; pyridoxal 5'-phosphate salvage; pyridoxal 5'-phosphate from pyridoxamine 5'-phosphate: step 1/1. It participates in cofactor metabolism; pyridoxal 5'-phosphate salvage; pyridoxal 5'-phosphate from pyridoxine 5'-phosphate: step 1/1. Its function is as follows. Catalyzes the oxidation of either pyridoxine 5'-phosphate (PNP) or pyridoxamine 5'-phosphate (PMP) into pyridoxal 5'-phosphate (PLP). In Paracidovorax citrulli (strain AAC00-1) (Acidovorax citrulli), this protein is Pyridoxine/pyridoxamine 5'-phosphate oxidase.